The primary structure comprises 229 residues: MSLPKPPLTELEKIVGYSFEQQGLLHQAMTHRSASSTHNERLEFLGDSILGLVIAEALYQKFPKVAEGDLSRMRAAIVCGRSLAKLGKKMGLGDFLSLGQGELKSGGYRRESILADAVEAIIGAIYLDSDMDTIRQVILNWFEPQLTLIEPGTSQKDPKTRLQELLQARQKPLPEYDVVATQGQAHNQQFTVNCSVEGIESPFKGTGTSRRKAEQAAATAALEHLQESA.

The region spanning 8-130 (LTELEKIVGY…IIGAIYLDSD (123 aa)) is the RNase III domain. Glu43 lines the Mg(2+) pocket. Asp47 is a catalytic residue. Residues Asp116 and Glu119 each contribute to the Mg(2+) site. Glu119 is a catalytic residue. The DRBM domain maps to 157–227 (DPKTRLQELL…ATAALEHLQE (71 aa)). A disordered region spans residues 201-229 (SPFKGTGTSRRKAEQAAATAALEHLQESA).

Belongs to the ribonuclease III family. As to quaternary structure, homodimer. The cofactor is Mg(2+).

It is found in the cytoplasm. It catalyses the reaction Endonucleolytic cleavage to 5'-phosphomonoester.. Its function is as follows. Digests double-stranded RNA. Involved in the processing of primary rRNA transcript to yield the immediate precursors to the large and small rRNAs (23S and 16S). Processes some mRNAs, and tRNAs when they are encoded in the rRNA operon. Processes pre-crRNA and tracrRNA of type II CRISPR loci if present in the organism. The sequence is that of Ribonuclease 3 from Idiomarina loihiensis (strain ATCC BAA-735 / DSM 15497 / L2-TR).